The chain runs to 349 residues: Phosphoribosylformylglycinamidine cyclo-ligase (349 aa).

It belongs to the AIR synthase family.

It localises to the cytoplasm. It carries out the reaction 2-formamido-N(1)-(5-O-phospho-beta-D-ribosyl)acetamidine + ATP = 5-amino-1-(5-phospho-beta-D-ribosyl)imidazole + ADP + phosphate + H(+). It participates in purine metabolism; IMP biosynthesis via de novo pathway; 5-amino-1-(5-phospho-D-ribosyl)imidazole from N(2)-formyl-N(1)-(5-phospho-D-ribosyl)glycinamide: step 2/2. The chain is Phosphoribosylformylglycinamidine cyclo-ligase from Bordetella pertussis (strain Tohama I / ATCC BAA-589 / NCTC 13251).